A 911-amino-acid chain; its full sequence is Facilitated trehalose transporter Tret1 (911 aa).

The segment at M1–T256 is disordered. The Cytoplasmic portion of the chain corresponds to M1–Y446. A compositionally biased stretch (gly residues) spans G8–G19. The span at K32 to E50 shows a compositional bias: basic and acidic residues. 3 stretches are compositionally biased toward low complexity: residues S51 to T64, A76 to R129, and Q156 to Q166. S302, S303, and S304 each carry phosphoserine. A disordered region spans residues V334–I355. Residues S374 and S376 each carry the phosphoserine modification. A disordered region spans residues F380–R402. The span at R384–T395 shows a compositional bias: polar residues. The chain crosses the membrane as a helical span at residues I447–A467. The Extracellular portion of the chain corresponds to S468 to S494. An N-linked (GlcNAc...) asparagine glycan is attached at N482. The helical transmembrane segment at W495 to I515 threads the bilayer. Over E516–T527 the chain is Cytoplasmic. Residues A528–L548 form a helical membrane-spanning segment. Topologically, residues C549–R551 are extracellular. Residues F552–T572 form a helical membrane-spanning segment. The Cytoplasmic segment spans residues V573–R578. The helical transmembrane segment at G579–A599 threads the bilayer. The Extracellular portion of the chain corresponds to G600 to S606. A helical transmembrane segment spans residues M607–P627. Residues E628–P690 are Cytoplasmic-facing. The helical transmembrane segment at L691–F711 threads the bilayer. Over Y712 to N727 the chain is Extracellular. A helical membrane pass occupies residues V728–I748. The Cytoplasmic segment spans residues D749–K754. The helical transmembrane segment at V755–F775 threads the bilayer. Residues Y776–C794 lie on the Extracellular side of the membrane. A helical transmembrane segment spans residues F795–G815. Residues E816 to K821 lie on the Cytoplasmic side of the membrane. A helical transmembrane segment spans residues I822–T842. Residues K843–H855 lie on the Extracellular side of the membrane. Residues G856–V876 form a helical membrane-spanning segment. Over P877–M911 the chain is Cytoplasmic. 2 positions are modified to phosphoserine: S899 and S900.

Belongs to the major facilitator superfamily. Sugar transporter (TC 2.A.1.1) family. Trehalose transporter subfamily.

The protein resides in the cell membrane. In terms of biological role, low-capacity facilitative transporter for trehalose. Does not transport maltose, sucrose or lactose. Mediates the bidirectional transfer of trehalose. Responsible for the transport of trehalose synthesized in the fat body and the incorporation of trehalose into other tissues that require a carbon source, thereby regulating trehalose levels in the hemolymph. This is Facilitated trehalose transporter Tret1 from Drosophila virilis (Fruit fly).